We begin with the raw amino-acid sequence, 691 residues long: DNA ligase (691 aa).

Residues D36–D40, S85–L86, and E118 contribute to the NAD(+) site. K120 serves as the catalytic N6-AMP-lysine intermediate. 4 residues coordinate NAD(+): R141, E178, K295, and K319. Zn(2+) contacts are provided by C413, C416, C431, and C437. Residues G595–P684 form the BRCT domain.

This sequence belongs to the NAD-dependent DNA ligase family. LigA subfamily. The cofactor is Mg(2+). Requires Mn(2+) as cofactor.

It carries out the reaction NAD(+) + (deoxyribonucleotide)n-3'-hydroxyl + 5'-phospho-(deoxyribonucleotide)m = (deoxyribonucleotide)n+m + AMP + beta-nicotinamide D-nucleotide.. Functionally, DNA ligase that catalyzes the formation of phosphodiester linkages between 5'-phosphoryl and 3'-hydroxyl groups in double-stranded DNA using NAD as a coenzyme and as the energy source for the reaction. It is essential for DNA replication and repair of damaged DNA. This Chromohalobacter salexigens (strain ATCC BAA-138 / DSM 3043 / CIP 106854 / NCIMB 13768 / 1H11) protein is DNA ligase.